The primary structure comprises 181 residues: Large ribosomal subunit protein uL5 (181 aa).

It belongs to the universal ribosomal protein uL5 family. In terms of assembly, part of the 50S ribosomal subunit; part of the 5S rRNA/L5/L18/L25 subcomplex. Contacts the 5S rRNA and the P site tRNA. Forms a bridge to the 30S subunit in the 70S ribosome.

This is one of the proteins that bind and probably mediate the attachment of the 5S RNA into the large ribosomal subunit, where it forms part of the central protuberance. In the 70S ribosome it contacts protein S13 of the 30S subunit (bridge B1b), connecting the 2 subunits; this bridge is implicated in subunit movement. Contacts the P site tRNA; the 5S rRNA and some of its associated proteins might help stabilize positioning of ribosome-bound tRNAs. The sequence is that of Large ribosomal subunit protein uL5 from Aster yellows witches'-broom phytoplasma (strain AYWB).